Reading from the N-terminus, the 147-residue chain is uncharacterized protein (147 aa).

2 consecutive transmembrane segments (helical) span residues 42-62 and 64-84; these read WASL…SPEP and LILQ…ATAF.

It localises to the cell membrane. This is an uncharacterized protein from Bacillus subtilis (strain 168).